Consider the following 117-residue polypeptide: Phosphoribosyl-ATP pyrophosphatase (117 aa).

Residues glycine 96 to serine 105 are compositionally biased toward basic and acidic residues. Positions glycine 96 to glutamate 117 are disordered. The segment covering arginine 106 to glutamate 117 has biased composition (polar residues).

Belongs to the PRA-PH family.

It localises to the cytoplasm. The enzyme catalyses 1-(5-phospho-beta-D-ribosyl)-ATP + H2O = 1-(5-phospho-beta-D-ribosyl)-5'-AMP + diphosphate + H(+). It participates in amino-acid biosynthesis; L-histidine biosynthesis; L-histidine from 5-phospho-alpha-D-ribose 1-diphosphate: step 2/9. The sequence is that of Phosphoribosyl-ATP pyrophosphatase from Nitrosomonas eutropha (strain DSM 101675 / C91 / Nm57).